We begin with the raw amino-acid sequence, 341 residues long: MIELCGLKKSFSGKLALNDINLFIQEGEVFGVIGKSGAGKSTLLRCINILEKPDEGEVVIDGQNLMSLSRKDLALARHKIAMIFQHFNLLNSKTVFDNIALPMRIQGIDEESIKQKIEELLPVVELTDKKDAFPSQLSGGQKQRVAIARALSCSPKVLLCDEATSALDPATTDAILSLLKKINELYGITIVLITHEMDVVKRICQRLSVMVDGKIVETTALSNIFNKPESLARKMLYAQISPELPTCLTRRLADYATEKPLVRLFFQGEEATVPFISQTSRELNMDINILLANIDRFDGVTCGVLVVELTANPLLLEAFINRCEQAGITVEVLGYVLPDGL.

One can recognise an ABC transporter domain in the interval 2–237; sequence IELCGLKKSF…PESLARKMLY (236 aa). An ATP-binding site is contributed by 34-41; that stretch reads GKSGAGKS.

This sequence belongs to the ABC transporter superfamily. Methionine importer (TC 3.A.1.24) family. In terms of assembly, the complex is composed of two ATP-binding proteins (MetN), two transmembrane proteins (MetI) and a solute-binding protein (MetQ).

The protein localises to the cell inner membrane. It carries out the reaction L-methionine(out) + ATP + H2O = L-methionine(in) + ADP + phosphate + H(+). It catalyses the reaction D-methionine(out) + ATP + H2O = D-methionine(in) + ADP + phosphate + H(+). In terms of biological role, part of the ABC transporter complex MetNIQ involved in methionine import. Responsible for energy coupling to the transport system. The polypeptide is Methionine import ATP-binding protein MetN (Legionella pneumophila (strain Lens)).